A 140-amino-acid polypeptide reads, in one-letter code: ATP synthase epsilon chain (140 aa).

Belongs to the ATPase epsilon chain family. As to quaternary structure, F-type ATPases have 2 components, CF(1) - the catalytic core - and CF(0) - the membrane proton channel. CF(1) has five subunits: alpha(3), beta(3), gamma(1), delta(1), epsilon(1). CF(0) has three main subunits: a, b and c.

It localises to the cell inner membrane. In terms of biological role, produces ATP from ADP in the presence of a proton gradient across the membrane. The polypeptide is ATP synthase epsilon chain (Alkalilimnicola ehrlichii (strain ATCC BAA-1101 / DSM 17681 / MLHE-1)).